Here is a 113-residue protein sequence, read N- to C-terminus: DNA-binding protein Mevan_1162 (113 aa).

Residues 1–12 are compositionally biased toward basic and acidic residues; the sequence is MDPEEIKQKKLQ. A disordered region spans residues 1-22; sequence MDPEEIKQKKLQEMQAKAQDPE.

It belongs to the PDCD5 family.

This Methanococcus vannielii (strain ATCC 35089 / DSM 1224 / JCM 13029 / OCM 148 / SB) protein is DNA-binding protein Mevan_1162.